A 617-amino-acid chain; its full sequence is Acetolactate synthase large subunit (617 aa).

Residue glutamate 71 participates in thiamine diphosphate binding. FAD-binding positions include arginine 173, 281–302 (HGTAYANFAVTECDLLIAVGAR), and 324–343 (EIDPAEIGKNRKADVAVLGD). The interval 413 to 492 (QHQMWAAQHL…VKVVIVNNHW (80 aa)) is thiamine pyrophosphate binding. The Mg(2+) site is built by aspartate 463 and asparagine 490.

It belongs to the TPP enzyme family. As to quaternary structure, dimer of large and small chains. It depends on Mg(2+) as a cofactor. Requires thiamine diphosphate as cofactor.

It catalyses the reaction 2 pyruvate + H(+) = (2S)-2-acetolactate + CO2. It participates in amino-acid biosynthesis; L-isoleucine biosynthesis; L-isoleucine from 2-oxobutanoate: step 1/4. Its pathway is amino-acid biosynthesis; L-valine biosynthesis; L-valine from pyruvate: step 1/4. This is Acetolactate synthase large subunit (ilvB) from Parasynechococcus marenigrum (strain WH8102).